We begin with the raw amino-acid sequence, 108 residues long: Small ribosomal subunit protein uS10 (108 aa).

It belongs to the universal ribosomal protein uS10 family. Part of the 30S ribosomal subunit.

Its function is as follows. Involved in the binding of tRNA to the ribosomes. This is Small ribosomal subunit protein uS10 from Rhodopirellula baltica (strain DSM 10527 / NCIMB 13988 / SH1).